A 137-amino-acid chain; its full sequence is Large ribosomal subunit protein uL16 (137 aa).

This sequence belongs to the universal ribosomal protein uL16 family. In terms of assembly, part of the 50S ribosomal subunit.

Binds 23S rRNA and is also seen to make contacts with the A and possibly P site tRNAs. The protein is Large ribosomal subunit protein uL16 of Sorangium cellulosum (strain So ce56) (Polyangium cellulosum (strain So ce56)).